The sequence spans 1243 residues: Zinc finger protein ZFAT (1243 aa).

A C2H2-type 1 zinc finger spans residues 12 to 35; that stretch reads FMCKCCNLFSPNQSELLSHVSEKH. Disordered regions lie at residues 51-116 and 147-189; these read PLST…PSSL and GEAG…GKEA. The span at 70–81 shows a compositional bias: basic residues; sequence MKRKRGRPKGST. Residues 116–141 form a C2H2-type 2; degenerate zinc finger; the sequence is LECSKCCRKFSNTRQLRKHICIIVLN. A compositionally biased stretch (basic and acidic residues) spans 156 to 189; that stretch reads ELEKKCKEDDREKASKRPRSQKTEKVQKISGKEA. 7 C2H2-type zinc fingers span residues 271-293, 299-321, 326-349, 354-377, 404-426, 432-454, and 458-481; these read FTCE…LRIH, YKCP…LRKH, FACD…ERVH, QHCR…RDAH, YDCH…MLVH, FACE…VRKH, and YVCA…KEVH. Cys273, Cys276, His289, His293, Cys301, Cys304, His317, His321, Cys328, Cys331, His344, His349, Cys356, Cys359, His372, His377, Cys406, Cys409, His422, and His426 together coordinate Zn(2+). Residues Cys460, Cys463, His476, and His481 each coordinate Zn(2+). Disordered stretches follow at residues 534 to 570, 603 to 625, and 638 to 705; these read EACP…AEST, TSSA…SSVQ, and AQSA…CKAA. Residues 610-620 show a composition bias toward basic and acidic residues; it reads AAPEKPPDMQH. Over residues 638–650 the composition is skewed to polar residues; it reads AQSAGSDQESHGA. 10 consecutive C2H2-type zinc fingers follow at residues 742–764, 770–793, 798–822, 830–853, 880–903, 909–931, 937–959, 966–988, 994–1017, and 1041–1064; these read LECE…VRTH, YYCS…IQKH, LKCP…LKVH, YSCP…KTNH, MKCP…IWAH, FKCS…MNRH, HLCD…KLLH, FKCT…MEQH, FRCA…NRKH, and LKCP…KNKH. Residues Cys772, Cys775, His788, His793, Cys800, Cys805, His818, His822, Cys832, Cys835, His848, His853, Cys882, Cys885, His899, His903, Cys911, Cys914, His927, His931, Cys939, Cys942, His955, and Leu958 each contribute to the Zn(2+) site.

Isoform 1 is strongly expressed in placenta, spleen, kidney, testis and peripheral blood leukocytes. Expressed in CD4+ and CD8+ T-cells, CD19+ B-cells and CB14+ monocytes. Isoform 3 is strongly expressed in placenta, ovary, tonsil, CD19+ B-cells and CD14+ monocytes.

It localises to the nucleus. It is found in the cytoplasm. The protein resides in the cytosol. May be involved in transcriptional regulation. Overexpression causes down-regulation of a number of genes involved in the immune response. Some genes are also up-regulated. The chain is Zinc finger protein ZFAT (ZFAT) from Homo sapiens (Human).